Consider the following 41-residue polypeptide: Photosystem II reaction center protein Y (41 aa).

Residues 4–22 (LIVVVLPILAAVTWVVFNI) traverse the membrane as a helical segment.

The protein belongs to the PsbY family. In terms of assembly, PSII is composed of 1 copy each of membrane proteins PsbA, PsbB, PsbC, PsbD, PsbE, PsbF, PsbH, PsbI, PsbJ, PsbK, PsbL, PsbM, PsbT, PsbX, PsbY, Psb30/Ycf12, peripheral proteins PsbO, CyanoQ (PsbQ), PsbU, PsbV and a large number of cofactors. It forms dimeric complexes.

Its subcellular location is the cellular thylakoid membrane. Functionally, loosely associated component of the core of photosystem II (PSII), it is not always seen in crystals. PSII is a light-driven water plastoquinone oxidoreductase, using light energy to abstract electrons from H(2)O, generating a proton gradient subsequently used for ATP formation. The sequence is that of Photosystem II reaction center protein Y from Prochlorococcus marinus (strain MIT 9211).